The sequence spans 94 residues: Progonadoliberin-1 (94 aa).

Positions methionine 1–cysteine 22 are cleaved as a signal peptide. The residue at position 23 (glutamine 23) is a Pyrrolidone carboxylic acid. Glycine 32 carries the glycine amide modification.

Belongs to the GnRH family. As to expression, synthesized in preoptic neurons and is transported to the pituitary in the preoptic-hypophyseal axons.

The protein localises to the secreted. Its function is as follows. Stimulates the secretion of gonadotropins. May be responsible for the regulation of the hypothalamic-pituitary-gonadal axis. The polypeptide is Progonadoliberin-1 (gnrh1) (Haplochromis burtoni (Burton's mouthbrooder)).